Reading from the N-terminus, the 363-residue chain is Spermidine/putrescine import ATP-binding protein PotA (363 aa).

In terms of domain architecture, ABC transporter spans 5–236 (IKLKHVRKEY…PVNDFVARFI (232 aa)). 38-45 (GPSGSGKT) provides a ligand contact to ATP.

It belongs to the ABC transporter superfamily. Spermidine/putrescine importer (TC 3.A.1.11.1) family. As to quaternary structure, the complex is composed of two ATP-binding proteins (PotA), two transmembrane proteins (PotB and PotC) and a solute-binding protein (PotD).

The protein resides in the cell membrane. It catalyses the reaction ATP + H2O + polyamine-[polyamine-binding protein]Side 1 = ADP + phosphate + polyamineSide 2 + [polyamine-binding protein]Side 1.. Its function is as follows. Part of the ABC transporter complex PotABCD involved in spermidine/putrescine import. Responsible for energy coupling to the transport system. This Lactobacillus johnsonii (strain CNCM I-12250 / La1 / NCC 533) protein is Spermidine/putrescine import ATP-binding protein PotA.